The chain runs to 145 residues: Protein SPMIP3 (145 aa).

This Mus musculus (Mouse) protein is Protein SPMIP3.